The chain runs to 461 residues: Bifunctional protein HldE (461 aa).

The tract at residues 1-312 (MLEFLSQQKP…IRSFKSMSFE (312 aa)) is ribokinase. 191–194 (NKKE) is a binding site for ATP. Aspartate 259 is a catalytic residue. Residues 334–461 (FTNGCFDIVH…KIIEKIKDKK (128 aa)) form a cytidylyltransferase region.

The protein in the N-terminal section; belongs to the carbohydrate kinase PfkB family. In the C-terminal section; belongs to the cytidylyltransferase family. Homodimer.

It carries out the reaction D-glycero-beta-D-manno-heptose 7-phosphate + ATP = D-glycero-beta-D-manno-heptose 1,7-bisphosphate + ADP + H(+). The enzyme catalyses D-glycero-beta-D-manno-heptose 1-phosphate + ATP + H(+) = ADP-D-glycero-beta-D-manno-heptose + diphosphate. Its pathway is nucleotide-sugar biosynthesis; ADP-L-glycero-beta-D-manno-heptose biosynthesis; ADP-L-glycero-beta-D-manno-heptose from D-glycero-beta-D-manno-heptose 7-phosphate: step 1/4. It functions in the pathway nucleotide-sugar biosynthesis; ADP-L-glycero-beta-D-manno-heptose biosynthesis; ADP-L-glycero-beta-D-manno-heptose from D-glycero-beta-D-manno-heptose 7-phosphate: step 3/4. Its function is as follows. Catalyzes the phosphorylation of D-glycero-D-manno-heptose 7-phosphate at the C-1 position to selectively form D-glycero-beta-D-manno-heptose-1,7-bisphosphate. Catalyzes the ADP transfer from ATP to D-glycero-beta-D-manno-heptose 1-phosphate, yielding ADP-D-glycero-beta-D-manno-heptose. This Campylobacter jejuni (strain RM1221) protein is Bifunctional protein HldE.